A 513-amino-acid polypeptide reads, in one-letter code: tRNA-2-methylthio-N(6)-dimethylallyladenosine synthase (513 aa).

The region spanning 67–185 (KTFLIKTYGC…LPEILEEAYL (119 aa)) is the MTTase N-terminal domain. The [4Fe-4S] cluster site is built by Cys76, Cys112, Cys146, Cys222, Cys226, and Cys229. The Radical SAM core domain occupies 208–438 (REGNIKAWVN…NKKVACYSER (231 aa)). Residues 441–504 (QQYEGQTVQV…QFSLNGTFIS (64 aa)) enclose the TRAM domain.

Belongs to the methylthiotransferase family. MiaB subfamily. Monomer. It depends on [4Fe-4S] cluster as a cofactor.

It localises to the cytoplasm. The enzyme catalyses N(6)-dimethylallyladenosine(37) in tRNA + (sulfur carrier)-SH + AH2 + 2 S-adenosyl-L-methionine = 2-methylsulfanyl-N(6)-dimethylallyladenosine(37) in tRNA + (sulfur carrier)-H + 5'-deoxyadenosine + L-methionine + A + S-adenosyl-L-homocysteine + 2 H(+). In terms of biological role, catalyzes the methylthiolation of N6-(dimethylallyl)adenosine (i(6)A), leading to the formation of 2-methylthio-N6-(dimethylallyl)adenosine (ms(2)i(6)A) at position 37 in tRNAs that read codons beginning with uridine. This is tRNA-2-methylthio-N(6)-dimethylallyladenosine synthase from Staphylococcus saprophyticus subsp. saprophyticus (strain ATCC 15305 / DSM 20229 / NCIMB 8711 / NCTC 7292 / S-41).